Consider the following 159-residue polypeptide: D-aminoacyl-tRNA deacylase (159 aa).

The short motif at 146-147 is the Gly-cisPro motif, important for rejection of L-amino acids element; the sequence is GP.

It belongs to the DTD family. Homodimer.

The protein localises to the cytoplasm. It catalyses the reaction glycyl-tRNA(Ala) + H2O = tRNA(Ala) + glycine + H(+). It carries out the reaction a D-aminoacyl-tRNA + H2O = a tRNA + a D-alpha-amino acid + H(+). Its function is as follows. An aminoacyl-tRNA editing enzyme that deacylates mischarged D-aminoacyl-tRNAs. Also deacylates mischarged glycyl-tRNA(Ala), protecting cells against glycine mischarging by AlaRS. Acts via tRNA-based rather than protein-based catalysis; rejects L-amino acids rather than detecting D-amino acids in the active site. By recycling D-aminoacyl-tRNA to D-amino acids and free tRNA molecules, this enzyme counteracts the toxicity associated with the formation of D-aminoacyl-tRNA entities in vivo and helps enforce protein L-homochirality. This Bifidobacterium animalis subsp. lactis (strain AD011) protein is D-aminoacyl-tRNA deacylase.